Here is a 392-residue protein sequence, read N- to C-terminus: Outer membrane protein assembly factor BamB (392 aa).

Residues 1 to 19 (MQLRKLLLPGLLSVTLLSG) form the signal peptide. The N-palmitoyl cysteine moiety is linked to residue C20. The S-diacylglycerol cysteine moiety is linked to residue C20.

The protein belongs to the BamB family. Part of the Bam complex, which is composed of the outer membrane protein BamA, and four lipoproteins BamB, BamC, BamD and BamE. Monomer. Interacts directly with BamA. The Bam complex has the shape of a hat, with the BamA beta-barrel crown in the outer membrane and the periplasmic brim formed by the BamA POTRA domains and the 4 lipoproteins.

It is found in the cell outer membrane. Part of the outer membrane protein assembly complex (Bam), which is involved in assembly and insertion of beta-barrel proteins into the outer membrane. Nonessential member of the complex, which may orient the flexible periplasmic domain of BamA for interaction with other Bam components, chaperones and nascent outer membrane proteins. Efficient substrate folding and insertion into the outer membrane requires all 5 subunits. A lateral gate may open between the first and last strands of the BamA beta-barrel that allows substrate to insert into the outer membrane; comparison of the structures of complete and nearly complete Bam complexes show there is considerable movement of all 5 proteins. The polypeptide is Outer membrane protein assembly factor BamB (Escherichia coli (strain K12)).